A 265-amino-acid chain; its full sequence is Adenosylcobinamide-GDP ribazoletransferase (265 aa).

5 consecutive transmembrane segments (helical) span residues 59-79, 113-133, 141-161, 183-203, and 206-226; these read LSWI…SVLI, IGTF…LLLV, WIFL…ALLL, LPPF…VYFL, and FQNQ…FVFY.

The protein belongs to the CobS family. Mg(2+) is required as a cofactor.

The protein resides in the cell inner membrane. It carries out the reaction alpha-ribazole + adenosylcob(III)inamide-GDP = adenosylcob(III)alamin + GMP + H(+). The catalysed reaction is alpha-ribazole 5'-phosphate + adenosylcob(III)inamide-GDP = adenosylcob(III)alamin 5'-phosphate + GMP + H(+). Its pathway is cofactor biosynthesis; adenosylcobalamin biosynthesis; adenosylcobalamin from cob(II)yrinate a,c-diamide: step 7/7. Its function is as follows. Joins adenosylcobinamide-GDP and alpha-ribazole to generate adenosylcobalamin (Ado-cobalamin). Also synthesizes adenosylcobalamin 5'-phosphate from adenosylcobinamide-GDP and alpha-ribazole 5'-phosphate. The sequence is that of Adenosylcobinamide-GDP ribazoletransferase from Leptospira interrogans serogroup Icterohaemorrhagiae serovar copenhageni (strain Fiocruz L1-130).